Here is a 244-residue protein sequence, read N- to C-terminus: NAD(P)H-quinone oxidoreductase subunit K (244 aa).

[4Fe-4S] cluster-binding residues include C60, C61, C125, and C156. Over residues 221 to 236 (SKKEKITELPENREQT) the composition is skewed to basic and acidic residues. Positions 221 to 244 (SKKEKITELPENREQTEIINSEEE) are disordered.

The protein belongs to the complex I 20 kDa subunit family. As to quaternary structure, NDH-1 can be composed of about 15 different subunits; different subcomplexes with different compositions have been identified which probably have different functions. [4Fe-4S] cluster serves as cofactor.

It localises to the cellular thylakoid membrane. The enzyme catalyses a plastoquinone + NADH + (n+1) H(+)(in) = a plastoquinol + NAD(+) + n H(+)(out). It catalyses the reaction a plastoquinone + NADPH + (n+1) H(+)(in) = a plastoquinol + NADP(+) + n H(+)(out). In terms of biological role, NDH-1 shuttles electrons from an unknown electron donor, via FMN and iron-sulfur (Fe-S) centers, to quinones in the respiratory and/or the photosynthetic chain. The immediate electron acceptor for the enzyme in this species is believed to be plastoquinone. Couples the redox reaction to proton translocation, and thus conserves the redox energy in a proton gradient. Cyanobacterial NDH-1 also plays a role in inorganic carbon-concentration. The chain is NAD(P)H-quinone oxidoreductase subunit K from Prochlorococcus marinus (strain MIT 9312).